The chain runs to 432 residues: Monooxygenase penA (432 aa).

Residues 7-29 traverse the membrane as a helical segment; the sequence is FKIAIIGAGPAGLTLASLLTASP. A glycan (N-linked (GlcNAc...) asparagine) is linked at Asn33.

Belongs to the aromatic-ring hydroxylase family. Requires FAD as cofactor.

Its subcellular location is the membrane. It functions in the pathway secondary metabolite biosynthesis. The protein operates within alkaloid biosynthesis. Its pathway is mycotoxin biosynthesis. In terms of biological role, monooxygenase; part of the gene cluster that mediates the biosynthesis of penigequinolones, potent insecticidal alkaloids that contain a highly modified 10-carbon prenyl group. The first stage is catalyzed by the nonribosomal peptide synthetase penN that condenses anthranilic acid and O-methyl-L-tyrosine to produce 4'-methoxycyclopeptin. 4'-methoxycyclopeptin is then converted to 4'-methoxydehydrocyclopeptin by the ketoglutarate-dependent dioxygenase penM through dehydrogenation to form a double bond between C-alpha and C-beta of the O-methyltyrosine side chain. PenM also converts its first product methoxydehydrocyclopeptin to 4'-methoxycyclopenin. The following conversion of 4'methoxycyclopenin into 4'-methoxyviridicatin is catalyzed by the cyclopenase penL. 4'-methoxyviridicatin is the precursor of quinolone natural products, and is further converted to quinolinone B. The prenyltransferase penI then catalyzes the canonical Friedel-Crafts alkylation of quinolinone B with dimethylallyl cation to yield dimethylallyl quinolone, which is subjected to FAD-dependent dehydrogenation by the FAD-linked oxidoreductase penH to yield conjugated aryl diene. The delta(3') double bond then serves as the site of the second alkylation with DMAPP catalyzed by the prenyltransferase penG to yield a carbenium ion intermediate, which can be attacked by H(2)O to yield a styrenyl quinolone containing a C3'-hydroxyprenyl chain, or undergo cyclization to yield yaequinolones J1 and J2. The conversion of the styrenyl quinolone into the tetrahydrofuran-containing yaequinolone C is performed by the FAD-dependent monooxygenase penE and involves epoxidation of the terminal C7'-C8' olefin, followed by epoxide ring opening initiated by the C3' hydroxyl group. The predicted cysteine hydrolase penJ acts as an epoxide hydrolase that enhances the rate of the 5-exo-tet cyclization step, increasing the yield of yaequinolone C. PenF catalyzes the cationic rearrangement of the epoxide formed by penE (before ring opening to produce yaequinolone C) into yaequinolone D. Finally, the short-chain dehydrogenase/reductase (SDR)-like reductase penD, catalyzes both the dehydration of yaequinolone D and the reduction of the resulting oxonium to yield penigequinolone. This Penicillium thymicola protein is Monooxygenase penA.